The sequence spans 506 residues: NAD(P)H-quinone oxidoreductase subunit 2 (506 aa).

13 helical membrane-spanning segments follow: residues alanine 14–alanine 34, tryptophan 42–tryptophan 62, leucine 79–tryptophan 99, proline 108–glycine 128, leucine 132–tyrosine 152, leucine 167–leucine 187, phenylalanine 206–valine 226, proline 240–isoleucine 260, leucine 276–glutamine 296, methionine 302–threonine 322, valine 330–phenylalanine 350, leucine 374–glycine 394, and leucine 409–isoleucine 429.

Belongs to the complex I subunit 2 family. In terms of assembly, NDH-1 can be composed of about 15 different subunits; different subcomplexes with different compositions have been identified which probably have different functions.

Its subcellular location is the cellular thylakoid membrane. The enzyme catalyses a plastoquinone + NADH + (n+1) H(+)(in) = a plastoquinol + NAD(+) + n H(+)(out). It catalyses the reaction a plastoquinone + NADPH + (n+1) H(+)(in) = a plastoquinol + NADP(+) + n H(+)(out). In terms of biological role, NDH-1 shuttles electrons from an unknown electron donor, via FMN and iron-sulfur (Fe-S) centers, to quinones in the respiratory and/or the photosynthetic chain. The immediate electron acceptor for the enzyme in this species is believed to be plastoquinone. Couples the redox reaction to proton translocation, and thus conserves the redox energy in a proton gradient. Cyanobacterial NDH-1 also plays a role in inorganic carbon-concentration. The protein is NAD(P)H-quinone oxidoreductase subunit 2 of Prochlorococcus marinus (strain AS9601).